A 143-amino-acid polypeptide reads, in one-letter code: Transcriptional regulator MraZ (143 aa).

SpoVT-AbrB domains are found at residues 5–47 (EYSH…PQKE) and 76–119 (AAEC…SQEL).

This sequence belongs to the MraZ family. In terms of assembly, forms oligomers.

It is found in the cytoplasm. The protein localises to the nucleoid. The sequence is that of Transcriptional regulator MraZ from Carboxydothermus hydrogenoformans (strain ATCC BAA-161 / DSM 6008 / Z-2901).